The sequence spans 376 residues: Rhodopsin (376 aa).

At 1-51 the chain is on the extracellular side; that stretch reads MSLINEPSYSAYSWGGQGGYGNQTVVDKVLPEMLHLIDPHWYQFPPMNPLW. N-linked (GlcNAc...) asparagine glycosylation is present at Asn-22. The chain crosses the membrane as a helical span at residues 52-76; the sequence is HGLLGFVIGCLGFVSVVGNGMVIYI. The Cytoplasmic portion of the chain corresponds to 77 to 88; the sequence is FSTTKGLRTPSN. The helical transmembrane segment at 89-113 threads the bilayer; the sequence is LLVVNLAFSDFLMMLSMSPPMVINC. At 114-128 the chain is on the extracellular side; it reads YYETWVLGPFMCELY. Cys-125 and Cys-202 are disulfide-bonded. Residues 129–148 traverse the membrane as a helical segment; the sequence is ALLGSLFGCGSIWTMVMIAL. Over 149-167 the chain is Cytoplasmic; that stretch reads DRYNVIVKGLAAKPMTNKT. The helical transmembrane segment at 168–191 threads the bilayer; that stretch reads AMLRILGIWAMSIAWTVFPLFGWN. Over 192 to 215 the chain is Extracellular; it reads RYVPEGNMTACGTDYLNKEWVSRS. Asn-198 carries an N-linked (GlcNAc...) asparagine glycan. A helical membrane pass occupies residues 216–243; the sequence is YILVYSVFVYFLPLATIIYSYWFIVQAV. At 244–278 the chain is on the cytoplasmic side; it reads SAHEKQMREQAKKMNVASLRSAENANTSAECKLAK. The helical transmembrane segment at 279 to 302 threads the bilayer; that stretch reads VALMTISLWFFAWTPYLVTDFSGI. The Extracellular portion of the chain corresponds to 303-309; that stretch reads FEWGKIS. Residues 310–334 traverse the membrane as a helical segment; that stretch reads PLATIWCSLFAKANAVYNPIVYGIS. An N6-(retinylidene)lysine modification is found at Lys-321. At 335–376 the chain is on the cytoplasmic side; that stretch reads HPKYRAALNKKFPSLACASEPDDTASQASGATTVSDEKSASA. The interval 353-376 is disordered; sequence SEPDDTASQASGATTVSDEKSASA. Polar residues predominate over residues 358-368; it reads TASQASGATTV.

It belongs to the G-protein coupled receptor 1 family. Opsin subfamily. Post-translationally, phosphorylated on some or all of the serine and threonine residues present in the C-terminal region.

The protein resides in the membrane. Functionally, visual pigments are the light-absorbing molecules that mediate vision. They consist of an apoprotein, opsin, covalently linked to cis-retinal. This chain is Rhodopsin, found in Sphodromantis sp. (Mantis).